Reading from the N-terminus, the 354-residue chain is AT-rich binding protein (354 aa).

The segment at 31-54 (IVCHTCQEELQTQDKFWKHIQDEH) adopts a C2H2-type 1 zinc-finger fold. Disordered regions lie at residues 84–124 (LPLY…HDDQ) and 256–276 (EVQQ…SSAM). Basic and acidic residues-rich tracts occupy residues 89–100 (KVSENDQQRDDV) and 109–124 (QKEP…HDDQ). A compositionally biased stretch (low complexity) spans 264 to 276 (TNNSTTASASSAM). C2H2-type zinc fingers lie at residues 285 to 309 (YICD…RSVH) and 315 to 338 (FACE…KKKH).

As to quaternary structure, homooctamer. Fat body.

Its subcellular location is the nucleus. Its function is as follows. May be a transcription factor for genes having (A+T) stretches in their promoter and/or enhancer regions. Binds to AT rich DNA. This Sarcophaga peregrina (Flesh fly) protein is AT-rich binding protein.